We begin with the raw amino-acid sequence, 162 residues long: Large ribosomal subunit protein uL15 (162 aa).

Positions 1 to 18 are enriched in basic and acidic residues; that stretch reads MKLNEIRDNEGATKDRMR. Positions 1 to 42 are disordered; sequence MKLNEIRDNEGATKDRMRVGRGIGSGKGKTAGRGVKGQKART. Gly residues predominate over residues 21–35; that stretch reads RGIGSGKGKTAGRGV.

The protein belongs to the universal ribosomal protein uL15 family. Part of the 50S ribosomal subunit.

Binds to the 23S rRNA. The sequence is that of Large ribosomal subunit protein uL15 from Methylobacterium sp. (strain 4-46).